A 683-amino-acid chain; its full sequence is C-mannosyltransferase dpy-19 (683 aa).

The next 11 membrane-spanning stretches (helical) occupy residues 21 to 41, 167 to 187, 188 to 208, 220 to 240, 267 to 287, 298 to 318, 319 to 339, 344 to 364, 413 to 433, 467 to 487, and 502 to 522; these read SLYSQTWLASVVIIGLLVGYI, ITGVFIVAGTVASSIFYLGVL, VSDSIFGGFLSVLCFAFNHGE, ESFAFPFIIGHIAILTFVIKY, FAFFTQICSIFLAFSLDLIPF, IISFLIGFLLLFGNEMMITAL, YFPSILALGMIIYISPLLSNL, AYVLFLAIIFASITLGLKIGL, CGTLLIPLALISLVTFVFNFV, FLIMRLKLFMTPHLCIVAALF, and IRVSALVGVIAILFYRGIPNI.

This sequence belongs to the dpy-19 family. Expressed faintly in neuroblasts QL and QR, more strongly in the neighboring epidermal cells (dorsal hyp7 cells, ventral P cells and lateral V cells), and in dorsal and ventral body muscle cells.

The protein resides in the endoplasmic reticulum membrane. Functionally, C-mannosyltransferase that mediates C-mannosylation of tryptophan residues on target proteins such as unc-5 and mig-21. Mediates the attachment of alpha-mannose in C-C linkage to the C2 of the indole ring of tryptophan. C-mannosylation takes place in the endoplasmic reticulum and frequently found in thrombospondin (TSP) type-1 repeats and in the WSXWS motif of type I cytokine receptors. Required to orient neuroblasts QL and QR correctly on the anterior/posterior (A/P) axis: QL and QR are born in the same A/P position, but polarize and migrate left/right asymmetrically, QL migrates toward the posterior and QR migrates toward the anterior. Required with unc-40 to express mab-5 correctly in the Q cell descendants. The polypeptide is C-mannosyltransferase dpy-19 (dpy-19) (Caenorhabditis elegans).